A 105-amino-acid polypeptide reads, in one-letter code: Large ribosomal subunit protein bL21 (105 aa).

The protein belongs to the bacterial ribosomal protein bL21 family. In terms of assembly, part of the 50S ribosomal subunit. Contacts protein L20.

Functionally, this protein binds to 23S rRNA in the presence of protein L20. This chain is Large ribosomal subunit protein bL21, found in Rickettsia typhi (strain ATCC VR-144 / Wilmington).